We begin with the raw amino-acid sequence, 53 residues long: PQYQFVGAKLFRWWCWRRRGWRRRWWLVIKLMLIETSFALDCEALCFSGVRQV.

This is an uncharacterized protein from Plasmodium falciparum (isolate fcm17 / Senegal).